Reading from the N-terminus, the 524-residue chain is Methylmalonyl-CoA carboxyltransferase 12S subunit (524 aa).

The CoA carboxyltransferase N-terminal domain occupies 13–268 (MEGRVEQLAE…NNTEEASFVN (256 aa)). The carboxyltransferase stretch occupies residues 13 to 506 (MEGRVEQLAE…RRKIASALEM (494 aa)). The CoA carboxyltransferase C-terminal domain maps to 274 to 506 (SPNTELRDIV…RRKIASALEM (233 aa)).

As to quaternary structure, homohexamer. Transcarboxylase is composed of three subunits: 1.3S, 5S, and 12S. The core of the enzyme is composed of six 12S subunits. On each side of the core there are three pairs of 5S subunits. Each 5S dimer is attached to the core by two 1.3S subunits. Thus the total number of chains is 30 (6 + 12 + 12).

It carries out the reaction (S)-methylmalonyl-CoA + pyruvate = propanoyl-CoA + oxaloacetate. Its function is as follows. The 12S subunit specifically catalyzes the transfer of the carboxyl group of methylmalonyl CoA to the biotin of the 1.3S subunit forming propanoyl-CoA and carboxylated 1.3S-biotin. In Propionibacterium freudenreichii subsp. shermanii, this protein is Methylmalonyl-CoA carboxyltransferase 12S subunit.